Consider the following 281-residue polypeptide: Nucleoid occlusion protein (281 aa).

The segment at 1-24 (MKHPFSRLFSFGEKEQEEMEEKQE) is disordered. The segment at residues 145-164 (EALAQRLGKGQSTIANKLRL) is a DNA-binding region (H-T-H motif).

This sequence belongs to the ParB family.

Its subcellular location is the cytoplasm. The protein resides in the nucleoid. Effects nucleoid occlusion by binding relatively nonspecifically to DNA and preventing the assembly of the division machinery in the vicinity of the nucleoid, especially under conditions that disturb the cell cycle. It helps to coordinate cell division and chromosome segregation by preventing the formation of the Z ring through the nucleoid, which would cause chromosome breakage. The sequence is that of Nucleoid occlusion protein from Geobacillus kaustophilus (strain HTA426).